The sequence spans 211 residues: Proteasome subunit beta (211 aa).

Residues 1-9 constitute a propeptide, removed in mature form; by autocatalysis; sequence MDNDKYLKG. Catalysis depends on Thr-10, which acts as the Nucleophile.

This sequence belongs to the peptidase T1B family. The 20S proteasome core is composed of 14 alpha and 14 beta subunits that assemble into four stacked heptameric rings, resulting in a barrel-shaped structure. The two inner rings, each composed of seven catalytic beta subunits, are sandwiched by two outer rings, each composed of seven alpha subunits. The catalytic chamber with the active sites is on the inside of the barrel. Has a gated structure, the ends of the cylinder being occluded by the N-termini of the alpha-subunits. Is capped at one or both ends by the proteasome regulatory ATPase, PAN.

The protein resides in the cytoplasm. It catalyses the reaction Cleavage of peptide bonds with very broad specificity.. With respect to regulation, the formation of the proteasomal ATPase PAN-20S proteasome complex, via the docking of the C-termini of PAN into the intersubunit pockets in the alpha-rings, triggers opening of the gate for substrate entry. Interconversion between the open-gate and close-gate conformations leads to a dynamic regulation of the 20S proteasome proteolysis activity. In terms of biological role, component of the proteasome core, a large protease complex with broad specificity involved in protein degradation. The protein is Proteasome subunit beta of Methanosarcina barkeri (strain Fusaro / DSM 804).